We begin with the raw amino-acid sequence, 206 residues long: Nucleoside triphosphate pyrophosphatase (206 aa).

Asp71 functions as the Proton acceptor in the catalytic mechanism.

The protein belongs to the Maf family. The cofactor is a divalent metal cation.

The protein resides in the cytoplasm. It catalyses the reaction a ribonucleoside 5'-triphosphate + H2O = a ribonucleoside 5'-phosphate + diphosphate + H(+). It carries out the reaction a 2'-deoxyribonucleoside 5'-triphosphate + H2O = a 2'-deoxyribonucleoside 5'-phosphate + diphosphate + H(+). Functionally, nucleoside triphosphate pyrophosphatase. May have a dual role in cell division arrest and in preventing the incorporation of modified nucleotides into cellular nucleic acids. This is Nucleoside triphosphate pyrophosphatase from Rippkaea orientalis (strain PCC 8801 / RF-1) (Cyanothece sp. (strain PCC 8801)).